Consider the following 541-residue polypeptide: Calcium-dependent protein kinase 26 (541 aa).

A compositionally biased stretch (gly residues) spans Met1–Ala11. The tract at residues Met1–Arg74 is disordered. Residue Gly2 is the site of N-myristoyl glycine attachment. The span at Ala38 to Pro67 shows a compositional bias: low complexity. In terms of domain architecture, Protein kinase spans Tyr83–Ile341. ATP contacts are provided by residues Leu89–Thr97 and Lys112. The active-site Proton acceptor is the Asp207. The interval Ala347–Ile377 is autoinhibitory domain. EF-hand domains lie at Glu384–Lys419, Phe420–Met455, Asp456–Tyr491, and Ala493–Cys526. Ca(2+) contacts are provided by Asp397, Asp399, Ser401, Thr403, Glu408, Asp433, Asp435, Asn437, Glu444, Asp469, Asp471, Ser473, Tyr475, Glu480, Asp504, Asn506, Asp508, Arg510, and Glu515.

This sequence belongs to the protein kinase superfamily. Ser/Thr protein kinase family. CDPK subfamily. Specifically expressed in heading panicles, spikelets and mature pollen grains. Not expressed in vegetative tissues.

It localises to the membrane. The enzyme catalyses L-seryl-[protein] + ATP = O-phospho-L-seryl-[protein] + ADP + H(+). It carries out the reaction L-threonyl-[protein] + ATP = O-phospho-L-threonyl-[protein] + ADP + H(+). Its activity is regulated as follows. Activated by calcium. Autophosphorylation may play an important role in the regulation of the kinase activity. In terms of biological role, may play a role in signal transduction pathways that involve calcium as a second messenger. The sequence is that of Calcium-dependent protein kinase 26 from Oryza sativa subsp. japonica (Rice).